Here is a 47-residue protein sequence, read N- to C-terminus: Large ribosomal subunit protein bL33C (47 aa).

This sequence belongs to the bacterial ribosomal protein bL33 family.

This chain is Large ribosomal subunit protein bL33C, found in Staphylococcus aureus (strain MRSA252).